A 475-amino-acid chain; its full sequence is Probable pectate lyase 7 (475 aa).

Positions 1 to 24 are cleaved as a signal peptide; it reads METARLFKLVCVICIASLIPTIRA. 2 N-linked (GlcNAc...) asparagine glycosylation sites follow: Asn67 and Asn96. The disordered stretch occupies residues 91–117; that stretch reads ISSPTNSTRRSLTGRGKGKGKGKWSKL. Residues Asp271, Asp295, and Asp299 each contribute to the Ca(2+) site. Arg351 is an active-site residue.

This sequence belongs to the polysaccharide lyase 1 family. Ca(2+) serves as cofactor.

It carries out the reaction Eliminative cleavage of (1-&gt;4)-alpha-D-galacturonan to give oligosaccharides with 4-deoxy-alpha-D-galact-4-enuronosyl groups at their non-reducing ends.. Its pathway is glycan metabolism; pectin degradation; 2-dehydro-3-deoxy-D-gluconate from pectin: step 2/5. This Arabidopsis thaliana (Mouse-ear cress) protein is Probable pectate lyase 7.